The primary structure comprises 403 residues: Aurora kinase A (403 aa).

The tract at residues 1-125 (MDRSKENCIS…SKQKNEESKK (125 aa)) is disordered. Polar residues-rich tracts occupy residues 27–83 (VTQQ…QATS) and 91–101 (PLNNTQKSKQP). Serine 41 and serine 51 each carry phosphoserine. Residues 114 to 125 (LASKQKNEESKK) are compositionally biased toward basic and acidic residues. The 251-residue stretch at 133–383 (FEIGRPLGKG…LREVLEHPWI (251 aa)) folds into the Protein kinase domain. ATP is bound by residues lysine 143, lysine 162, and 211 to 213 (EYA). Catalysis depends on aspartate 256, which acts as the Proton acceptor. Lysine 258 is covalently cross-linked (Glycyl lysine isopeptide (Lys-Gly) (interchain with G-Cter in SUMO2)). Residues 260 to 261 (EN) and aspartate 274 contribute to the ATP site. Positions 280-293 (HAPSSRRTTLCGTL) are activation segment. Residues threonine 287 and threonine 288 each carry the phosphothreonine modification. Residue serine 342 is modified to Phosphoserine; by PKA and PAK.

This sequence belongs to the protein kinase superfamily. Ser/Thr protein kinase family. Aurora subfamily. Part of a complex composed of NEDD9, AURKA and CTTN; within the complex NEDD9 acts as a scaffold protein and is required for complex formation. Identified in a complex with AUNIP and NIN. Interacts with FBXL7. Interacts with CPEB1, JTB, TACC1, TPX2, PPP2CA, as well as with the protein phosphatase type 1 (PP1) isoforms PPP1CA, PPP1CB and PPP1CC. Also interacts with its substrates ARHGEF2, BORA, KIF2A, PARD3, and p53/TP53. Interaction with BORA promotes phosphorylation of PLK1. Interacts with CIMAP3. Interacts with GADD45A, competing with its oligomerization. Interacts (via C-terminus) with AUNIP (via C-terminus). Interacts with FRY; this interaction facilitates AURKA-mediated PLK1 phosphorylation. Interacts with SIRT2. Interacts with MYCN; interaction is phospho-independent and triggers AURKA activation; AURKA competes with FBXW7 for binding to unphosphorylated MYCN but not for binding to phosphorylated MYCN. Interacts with HNRNPU. Interacts with AAAS. Interacts with KLHL18 and CUL3. Interacts with FOXP1. Interacts with HDAC6; AURKA-mediated phosphorylation of HDAC6 promotes deacetylation of alpha-tubulin. In terms of processing, activated by phosphorylation at Thr-288; this brings about a change in the conformation of the activation segment. Phosphorylation at Thr-288 varies during the cell cycle and is highest during M phase. Autophosphorylated at Thr-288 upon TPX2 binding. Thr-288 can be phosphorylated by several kinases, including PAK and PKA. Protein phosphatase type 1 (PP1) binds AURKA and inhibits its activity by dephosphorylating Thr-288 during mitosis. Phosphorylation at Ser-342 decreases the kinase activity. PPP2CA controls degradation by dephosphorylating Ser-51 at the end of mitosis. Ubiquitinated by the E3 ubiquitin-protein ligase complex SCF(FBXL7) during mitosis, leading to its degradation by the proteasome. Ubiquitinated by CHFR, leading to its degradation by the proteasome. Ubiquitinated by the anaphase-promoting complex (APC), leading to its degradation by the proteasome. Ubiquitinated by the CUL3-KLHL18 ligase leading to its activation at the centrosome which is required for initiating mitotic entry. Ubiquitination mediated by CUL3-KLHL18 ligase does not lead to its degradation by the proteasome. In terms of tissue distribution, highly expressed in testis and weakly in skeletal muscle, thymus and spleen. Also highly expressed in colon, ovarian, prostate, neuroblastoma, breast and cervical cancer cell lines.

Its subcellular location is the cytoplasm. It is found in the cytoskeleton. The protein localises to the microtubule organizing center. The protein resides in the centrosome. It localises to the spindle pole. Its subcellular location is the centriole. It is found in the cell projection. The protein localises to the neuron projection. The protein resides in the cilium. It localises to the cilium basal body. Its subcellular location is the basolateral cell membrane. It carries out the reaction L-seryl-[protein] + ATP = O-phospho-L-seryl-[protein] + ADP + H(+). The catalysed reaction is L-threonyl-[protein] + ATP = O-phospho-L-threonyl-[protein] + ADP + H(+). With respect to regulation, activation of CDK1, appears to be an upstream event of AURKA activation. Phosphatase inhibitor-2 (PPP1R2) and TPX2 act also as activators. Inactivated by the G2 checkpoint. Inhibited by GADD45A and p53/TP53, and through dephosphorylation by protein phosphatase type 1 (PP1). MLN8054 is also a potent and selective inhibitor. Activated during the early phase of cilia disassembly in the presence of CIMAP3. Inhibited by the small molecule inhibitor VX-680. Its function is as follows. Mitotic serine/threonine kinase that contributes to the regulation of cell cycle progression. Associates with the centrosome and the spindle microtubules during mitosis and plays a critical role in various mitotic events including the establishment of mitotic spindle, centrosome duplication, centrosome separation as well as maturation, chromosomal alignment, spindle assembly checkpoint, and cytokinesis. Required for normal spindle positioning during mitosis and for the localization of NUMA1 and DCTN1 to the cell cortex during metaphase. Required for initial activation of CDK1 at centrosomes. Phosphorylates numerous target proteins, including ARHGEF2, BORA, BRCA1, CDC25B, DLGP5, HDAC6, KIF2A, LATS2, NDEL1, PARD3, PPP1R2, PLK1, RASSF1, TACC3, p53/TP53 and TPX2. Phosphorylates MCRS1 which is required for MCRS1-mediated kinetochore fiber assembly and mitotic progression. Regulates KIF2A tubulin depolymerase activity. Important for microtubule formation and/or stabilization. Required for normal axon formation. Plays a role in microtubule remodeling during neurite extension. Also acts as a key regulatory component of the p53/TP53 pathway, and particularly the checkpoint-response pathways critical for oncogenic transformation of cells, by phosphorylating and destabilizing p53/TP53. Phosphorylates its own inhibitors, the protein phosphatase type 1 (PP1) isoforms, to inhibit their activity. Inhibits cilia outgrowth. Required for cilia disassembly via phosphorylation of HDAC6 and subsequent deacetylation of alpha-tubulin. Regulates protein levels of the anti-apoptosis protein BIRC5 by suppressing the expression of the SCF(FBXL7) E3 ubiquitin-protein ligase substrate adapter FBXL7 through the phosphorylation of the transcription factor FOXP1. The polypeptide is Aurora kinase A (Homo sapiens (Human)).